The following is a 1357-amino-acid chain: DNA-directed RNA polymerase subunit beta (1357 aa).

Belongs to the RNA polymerase beta chain family. The RNAP catalytic core consists of 2 alpha, 1 beta, 1 beta' and 1 omega subunit. When a sigma factor is associated with the core the holoenzyme is formed, which can initiate transcription.

The catalysed reaction is RNA(n) + a ribonucleoside 5'-triphosphate = RNA(n+1) + diphosphate. DNA-dependent RNA polymerase catalyzes the transcription of DNA into RNA using the four ribonucleoside triphosphates as substrates. The chain is DNA-directed RNA polymerase subunit beta from Pseudomonas syringae pv. syringae (strain B728a).